A 314-amino-acid polypeptide reads, in one-letter code: MVKKNFIPSVSLVRRDLPTLVTTTTSSTALSKPTSSVVSETSSKSLPSLTSSAFSTSSGATSSSSLIVASITPPSTAGNPFILNAADKPNGTVYIAVGAVIGAIFISILIWWLVSSYLSRRFTMTNSYANDSKNLYRGHHKHSSSLQSNPFDINDEKSYMQDDWDSMSQLESSQYEDAASPFNPIQDPFTDXRRSLFISPTLQVSQYEKSHSRHQSKDTNIFIDDPSLYVGTYLEEEEEEERKLNLNRPQRAASPERKEKKINSMEGYHKRNQSSLGLIPVASATSNTSSPKKAHKRQAPSMFLDDVLNGREII.

The tract at residues 32 to 60 (KPTSSVVSETSSKSLPSLTSSAFSTSSGA) is disordered. The helical transmembrane segment at 93 to 113 (VYIAVGAVIGAIFISILIWWL) threads the bilayer. A phosphoserine mark is found at Ser148, Ser254, and Ser274. The tract at residues 240–309 (EERKLNLNRP…PSMFLDDVLN (70 aa)) is disordered. The segment covering 254-269 (SPERKEKKINSMEGYH) has biased composition (basic and acidic residues).

Belongs to the PRM5 family.

It is found in the vacuole membrane. The polypeptide is Vacuolar membrane protein VL3_4134 (Saccharomyces cerevisiae (strain Zymaflore VL3) (Baker's yeast)).